Consider the following 164-residue polypeptide: Small ribosomal subunit protein uS5 (164 aa).

In terms of domain architecture, S5 DRBM spans 9–72; that stretch reads YQEKLLKISR…AAAKKNIVKI (64 aa).

Belongs to the universal ribosomal protein uS5 family. In terms of assembly, part of the 30S ribosomal subunit. Contacts proteins S4 and S8.

Functionally, with S4 and S12 plays an important role in translational accuracy. In terms of biological role, located at the back of the 30S subunit body where it stabilizes the conformation of the head with respect to the body. This chain is Small ribosomal subunit protein uS5, found in Fusobacterium nucleatum subsp. nucleatum (strain ATCC 25586 / DSM 15643 / BCRC 10681 / CIP 101130 / JCM 8532 / KCTC 2640 / LMG 13131 / VPI 4355).